The following is a 298-amino-acid chain: MANSWWEIQVLCDPNLEESVFWRLDKFGCSGTATEIKGQSSVIKAYIPQITTQLLDLAALSLWLIQDALLVNLPRPITRWRLIDEEDWASSWKQHWQPTEIGDRMIIYPAWLTPPTDTDQIIIRLDPGSAFGTGTHATTQLCLESLEMRLTMDAEPVTLADIGCGSGILSIGAILLGAQKVYAVDTDPLAVSATRSNRHLNEIDPNHLIVNQGSIEQLLDLIPGQVDGIVCNILAEVIMDMIPQFTALTKPKSWAILSGILLEQAKPIADTLEQHDWVVAALWKRGDWCCFNIRKNSD.

S-adenosyl-L-methionine-binding residues include threonine 139, glycine 163, aspartate 185, and asparagine 232.

It belongs to the methyltransferase superfamily. PrmA family.

The protein localises to the cytoplasm. The enzyme catalyses L-lysyl-[protein] + 3 S-adenosyl-L-methionine = N(6),N(6),N(6)-trimethyl-L-lysyl-[protein] + 3 S-adenosyl-L-homocysteine + 3 H(+). Functionally, methylates ribosomal protein L11. The protein is Ribosomal protein L11 methyltransferase of Gloeothece citriformis (strain PCC 7424) (Cyanothece sp. (strain PCC 7424)).